The primary structure comprises 1003 residues: UPF0182 protein Mkms_1433 (1003 aa).

Helical transmembrane passes span 18 to 38 (VLIG…RFID), 63 to 83 (VVVF…GLAL), 114 to 134 (LFGF…AQSY), 176 to 196 (FVAT…FGGI), 211 to 231 (IQLV…YWLD), 260 to 280 (KLIL…AIVL), and 288 to 308 (IGVV…PLVV). Positions 902 to 937 (ATGPAPANLPDGQPAAQPPNGQQPAAQTPGNQAGRA) are enriched in low complexity. Residues 902 to 979 (ATGPAPANLP…MSGLQDAQRS (78 aa)) form a disordered region.

The protein belongs to the UPF0182 family.

It localises to the cell membrane. In Mycobacterium sp. (strain KMS), this protein is UPF0182 protein Mkms_1433.